We begin with the raw amino-acid sequence, 456 residues long: Hydroxymethylglutaryl coenzyme A synthase (456 aa).

Ala-34 lines the (3S)-3-hydroxy-3-methylglutaryl-CoA pocket. The active-site Proton donor/acceptor is Glu-85. Cys-119, Thr-161, Ser-211, His-258, Lys-267, Asn-335, and Ser-369 together coordinate (3S)-3-hydroxy-3-methylglutaryl-CoA. Catalysis depends on Cys-119, which acts as the Acyl-thioester intermediate. The active-site Proton donor/acceptor is His-258.

It belongs to the thiolase-like superfamily. HMG-CoA synthase family.

The enzyme catalyses acetoacetyl-CoA + acetyl-CoA + H2O = (3S)-3-hydroxy-3-methylglutaryl-CoA + CoA + H(+). Its function is as follows. HMG-CoA synthase; part of the gene cluster that mediates the biosynthesis of 1233A, a natural compound known as an inhibitor of HMG-CoA synthase in the mevalonate pathway and with antibacterial and antifungal activities. This enzyme condenses acetyl-CoA with acetoacetyl-CoA to form HMG-CoA, which is the substrate for HMG-CoA reductase. As part of the 1233A biosynthesis cluster, is involved in conferring self-resistance to 1233A. The sequence is that of Hydroxymethylglutaryl coenzyme A synthase from Fusarium sp.